The chain runs to 63 residues: Sperm protamine P1 (63 aa).

Residues 1–63 (MARYRRHSRS…RYSRRGRRRY (63 aa)) are disordered.

The protein belongs to the protamine P1 family. In terms of tissue distribution, testis.

The protein localises to the nucleus. Its subcellular location is the chromosome. Protamines substitute for histones in the chromatin of sperm during the haploid phase of spermatogenesis. They compact sperm DNA into a highly condensed, stable and inactive complex. In Sminthopsis bindi (Kakadu dunnart), this protein is Sperm protamine P1 (PRM1).